Here is a 498-residue protein sequence, read N- to C-terminus: MSDQLQTTDLSRVHMVGIGGAGMSGIARILLDRGYQVSGSDMKESRSIMALRAAGAQIQVGHAEDNLRLSGEMPTVVVTSFAAIPQDNPELVGAREAGIPVLRRSDILALLLQDRRAFLLAGTHGKTSTTSMAVAALQAAGQDPSFAIGGQLNRAGTNAHNGTGEVFVAEADESDGSFLSYSPEIAVVTNIEPDHLDYFKTESAYREVFEKFAHRIVPGGFLVVCLDDPGSAALAEELIAGAEEGNPLPFTVVGYGTAEGCDAHPSVPPAAIIESTEVTAEGTVSALRLTEEVKKAAEEAAGTYSLRVAIPGIHMVLNAAAAVLGSVLLGADVDKVIAGIGGFDGVRRRFEYHGTRQDVEVYDDYAHHPTEVAAVLAAARQRVEARGGRIVAVFQPHLYSRTMNFADEFAEALSLADQVVLLDIFGAREEPVEGVDSRIIGNKIDASTDWVFEPDFSKVSSVVAGLVQPGDMVLTIGAGTVTMLADEILLELDRGDRG.

Position 122–128 (122–128) interacts with ATP; it reads GTHGKTS.

Belongs to the MurCDEF family.

Its subcellular location is the cytoplasm. The catalysed reaction is UDP-N-acetyl-alpha-D-muramate + L-alanine + ATP = UDP-N-acetyl-alpha-D-muramoyl-L-alanine + ADP + phosphate + H(+). It functions in the pathway cell wall biogenesis; peptidoglycan biosynthesis. Functionally, cell wall formation. This is UDP-N-acetylmuramate--L-alanine ligase from Corynebacterium jeikeium (strain K411).